A 179-amino-acid chain; its full sequence is Putative invertase inhibitor (179 aa).

Residues Met1–Ser23 form the signal peptide. Cystine bridges form between Cys31–Cys46 and Cys102–Cys142.

This sequence belongs to the PMEI family. Monomer. In terms of processing, not glycosylated. As to expression, expressed in pollen (at protein level). Expressed in stem, but not leaves (at protein level). Expressed in pollen.

Its subcellular location is the secreted. The protein resides in the cell wall. It localises to the endoplasmic reticulum. In terms of biological role, invertase inhibitor. The sequence is that of Putative invertase inhibitor from Platanus acerifolia (London plane tree).